The primary structure comprises 198 residues: uncharacterized protein (198 aa).

The disordered stretch occupies residues 40-111 (GSALPPQAPT…LSRGAGQGAP (72 aa)). Residues 60-74 (SSRTPGPRPPRSTLR) are compositionally biased toward low complexity.

This is an uncharacterized protein from Homo sapiens (Human).